A 122-amino-acid chain; its full sequence is Mth938 domain-containing protein (122 aa).

Residues 6 to 122 (IASLSWGQMK…RVGGVFHSTC (117 aa)) form an MTH138-like domain region.

This sequence belongs to the AAMDC family.

Its subcellular location is the cytoplasm. In terms of biological role, may play a role in preadipocyte differentiation and adipogenesis. The polypeptide is Mth938 domain-containing protein (AAMDC) (Homo sapiens (Human)).